The sequence spans 227 residues: Thymidylate synthase (227 aa).

89–90 (RR) is a binding site for dUMP. C109 functions as the Nucleophile in the catalytic mechanism. DUMP contacts are provided by residues 129 to 132 (RSND), N140, and 170 to 172 (HVY). D132 lines the (6R)-5,10-methylene-5,6,7,8-tetrahydrofolate pocket.

This sequence belongs to the thymidylate synthase family. Bacterial-type ThyA subfamily. In terms of assembly, homodimer.

It localises to the cytoplasm. The catalysed reaction is dUMP + (6R)-5,10-methylene-5,6,7,8-tetrahydrofolate = 7,8-dihydrofolate + dTMP. It functions in the pathway pyrimidine metabolism; dTTP biosynthesis. Catalyzes the reductive methylation of 2'-deoxyuridine-5'-monophosphate (dUMP) to 2'-deoxythymidine-5'-monophosphate (dTMP) while utilizing 5,10-methylenetetrahydrofolate (mTHF) as the methyl donor and reductant in the reaction, yielding dihydrofolate (DHF) as a by-product. This enzymatic reaction provides an intracellular de novo source of dTMP, an essential precursor for DNA biosynthesis. This Bacillus atrophaeus protein is Thymidylate synthase.